Here is a 697-residue protein sequence, read N- to C-terminus: MFS antiporter QDR3 (697 aa).

Residues 1–141 lie on the Cytoplasmic side of the membrane; sequence MSHSPNLSPQ…ARDYPNKIKY (141 aa). The interval 38–109 is disordered; the sequence is HPIGHHGREQ…KPTSTSIKTN (72 aa). 2 stretches are compositionally biased toward low complexity: residues 53–69 and 85–99; these read NTTK…HTTT and DLSS…YLSQ. A helical transmembrane segment spans residues 142-162; sequence LIVFIIAFASLAGPFGTSVML. The Extracellular segment spans residues 163 to 180; it reads PAIDDIVNDLNTNVSTVN. 2 N-linked (GlcNAc...) asparagine glycosylation sites follow: Asn175 and Asn180. Residues 181-201 traverse the membrane as a helical segment; it reads VSVGIYLLSLGIFPLWWSSFS. Over 202-215 the chain is Cytoplasmic; the sequence is ERFGRRSVYMVSFT. Residues 216–236 form a helical membrane-spanning segment; it reads LFVAFSIGTALSPNIAALIVL. The Extracellular segment spans residues 237–240; that stretch reads RVLQ. Residues 241 to 261 form a helical membrane-spanning segment; that stretch reads GGSSASVQAVGAGTIADLFIP. At 262–268 the chain is on the cytoplasmic side; the sequence is QERGQAM. The helical transmembrane segment at 269-289 threads the bilayer; it reads GLYYLGPLAGPFLAPILGGAV. Residues 290–296 are Extracellular-facing; it reads SQAWGWR. Residues 297 to 317 traverse the membrane as a helical segment; it reads ATQWLLMIISACSFVLITFFL. Residues 318–485 are Cytoplasmic-facing; the sequence is PETLRRVDTI…SIILLKHPPV (168 aa). The segment at 338 to 367 is disordered; the sequence is DNNGSQNEKIHDDFAGADNSSVHDIDGNPI. A helical transmembrane segment spans residues 486–506; that stretch reads VLVISFSAISFAAIYFFNMAI. Over 507 to 519 the chain is Extracellular; sequence SYEYARSPYNFSS. Residue Asn516 is glycosylated (N-linked (GlcNAc...) asparagine). Residues 520 to 540 traverse the membrane as a helical segment; sequence VILGLMYIPNSVTYFMASIIG. The Cytoplasmic segment spans residues 541-565; sequence GKWNDRLLNRYAQKHGELVPESRLS. Residues 566–586 form a helical membrane-spanning segment; the sequence is WNIVVAIILYPMACLIFGWTI. Residues 587–590 are Extracellular-facing; sequence KYRE. Residues 591–611 form a helical membrane-spanning segment; the sequence is FWVIPLIGTALFGFASMLVIG. At 612–626 the chain is on the cytoplasmic side; sequence ATVTYLVDSLPGKGA. Residues 627–647 traverse the membrane as a helical segment; that stretch reads TGVALNNLIRQILAAIATFIV. Over 648–653 the chain is Extracellular; that stretch reads EPLLRA. The helical transmembrane segment at 654–674 threads the bilayer; it reads IGAGVLFSIIAGILLVSSLVL. Residues 675–697 lie on the Cytoplasmic side of the membrane; it reads LYLKKRGAFFREHYDVMDLYAKL.

Belongs to the major facilitator superfamily. CAR1 family.

It is found in the cell membrane. Its function is as follows. MFS antiporter that does not display functional linkage as drug transporter and performs functions that significantly affect biofilm development and virulence. No substrate for transport has been identified yet, but plays an important role in the growth in the host. This is MFS antiporter QDR3 (QDR3) from Candida albicans (strain SC5314 / ATCC MYA-2876) (Yeast).